A 1631-amino-acid chain; its full sequence is ABC transporter A family member 6 (1631 aa).

Transmembrane regions (helical) follow at residues 25 to 45 (ICCE…ILAL), 242 to 262 (SVFI…DVVI), 285 to 305 (SWII…VVIF), 317 to 337 (GIVI…SFIF), 346 to 366 (FCGL…IFVS), 372 to 392 (VSVK…SIYI), and 416 to 436 (ILML…FEKV). Positions 491–724 (ISIRNLRKEF…FGQGYLLTCN (234 aa)) constitute an ABC transporter 1 domain. 527–534 (GPNGCGKS) contacts ATP. 7 helical membrane-spanning segments follow: residues 866-886 (SFFL…ILYK), 1047-1067 (AIIY…GSFA), 1099-1119 (WDFF…AGVI), 1127-1147 (FGSF…LGYL), 1158-1178 (AVGA…IASL), 1198-1218 (IIDL…IVFI), and 1242-1262 (LGTP…WILL). Positions 1309–1544 (IQFKNLHKLF…FGAGYSIDVK (236 aa)) constitute an ABC transporter 2 domain. Position 1347–1354 (1347–1354 (GLNGGGKS)) interacts with ATP.

Belongs to the ABC transporter superfamily. ABCA family.

The protein localises to the membrane. The chain is ABC transporter A family member 6 (abcA6) from Dictyostelium discoideum (Social amoeba).